Here is a 685-residue protein sequence, read N- to C-terminus: MLQIGEDVDYLLIPREVRLAGGVWRVISKPATKEAEFRERLIQFLQEEGRTLEDVARIIEKSTPHPPQPRKRTKELRVRRVPQMVTPPLRLVVGTYDSSNGSDSELSDFDTSKVKGNRSSSGRTRKVRKMPVSYLGSKFLGSDVESEDDQELVEAFLRRGEKPSAPPPRRRVNLPVPMFENNLGPQPSKADRWREYVSQVSWGKLKQRVKGWAPRSGSEVGQTQQASTAAERAGEMRHSQASSDDDSSRNTGDRSDQMLGTRRWKPKIKWVSLRRCRKEQVPPFAQGTGMPAEEHPEAAENQGAEAAANQRAEPLASPRAEAAASPRAETAADPRVEAVASPRAEAAASPRAEAVADPRAEAAASPRAEAAASPRTEAAASLRAEAVASPRAEAAASPRAEAAADPRAEAAASPIAEAAANQKAELVDSPRAETAADPRAEAAASPRAEAVADPRVEAAASPIAEAAANQKAELVDSPRAETAADPRAEAAASPRAEAAADPRAEVAASPRAEAAASPRAEAEASPRAEAAASPKAEAEANLRVEAAAYLRAGVPPDQRAEAIDSQRAEGPANQRTGATENQRVEVLADQRAGVLHDQREEAGPQGIQEASAGSGSRAQKQVKTVRFQTPGRFSWFRMRRRVFWHTPRLPTLPRRVPRAGEARSLRVLRADIRADVEHREQEEQL.

The segment at 93–127 is disordered; it reads VGTYDSSNGSDSELSDFDTSKVKGNRSSSGRTRKV. Phosphoserine is present on residues Ser-142 and Ser-146. Disordered regions lie at residues 207-263, 281-538, 558-579, and 599-623; these read QRVK…GTRR, VPPF…KAEA, QRAEAIDSQRAEGPANQRTGAT, and REEAGPQGIQEASAGSGSRAQKQVK. Polar residues predominate over residues 219-228; it reads EVGQTQQAST. Basic and acidic residues predominate over residues 246-256; sequence DSSRNTGDRSD. 4 stretches are compositionally biased toward low complexity: residues 299 to 329, 337 to 353, 361 to 401, and 409 to 420; these read AENQGAEAAANQRAEPLASPRAEAAASPRAE, EAVASPRAEAAASPRAE, EAAA…PRAE, and EAAASPIAEAAA. Positions 425–440 are enriched in basic and acidic residues; that stretch reads ELVDSPRAETAADPRA. Residues 458–468 are compositionally biased toward low complexity; sequence AAASPIAEAAA. Positions 473-488 are enriched in basic and acidic residues; it reads ELVDSPRAETAADPRA. Residues 505–519 show a composition bias toward low complexity; that stretch reads EVAASPRAEAAASPR. Basic and acidic residues predominate over residues 558-567; sequence QRAEAIDSQR. The span at 611–622 shows a compositional bias: polar residues; the sequence is SAGSGSRAQKQV. The PxLPxI/L motif; mediates interaction with ANKRA2 motif lies at 647-653; that stretch reads PRLPTLP.

As to quaternary structure, component of the 3M complex, composed of core components CUL7, CCDC8 and OBSL1. Interacts (via PxLPxI/L motif) with ANKRA2 (via ankyrin repeats); may link the 3M complex to histone deacetylases including HDAC4 and HDAC5.

It localises to the cytoplasm. The protein localises to the cytoskeleton. It is found in the microtubule organizing center. The protein resides in the centrosome. In terms of biological role, core component of the 3M complex, a complex required to regulate microtubule dynamics and genome integrity. It is unclear how the 3M complex regulates microtubules, it could act by controlling the level of a microtubule stabilizer. Required for localization of CUL7 to the centrosome. This Mus musculus (Mouse) protein is Coiled-coil domain-containing protein 8 homolog (Ccdc8).